The sequence spans 255 residues: Imidazole glycerol phosphate synthase subunit HisF (255 aa).

Active-site residues include aspartate 12 and aspartate 131.

Belongs to the HisA/HisF family. Heterodimer of HisH and HisF.

The protein localises to the cytoplasm. It carries out the reaction 5-[(5-phospho-1-deoxy-D-ribulos-1-ylimino)methylamino]-1-(5-phospho-beta-D-ribosyl)imidazole-4-carboxamide + L-glutamine = D-erythro-1-(imidazol-4-yl)glycerol 3-phosphate + 5-amino-1-(5-phospho-beta-D-ribosyl)imidazole-4-carboxamide + L-glutamate + H(+). Its pathway is amino-acid biosynthesis; L-histidine biosynthesis; L-histidine from 5-phospho-alpha-D-ribose 1-diphosphate: step 5/9. In terms of biological role, IGPS catalyzes the conversion of PRFAR and glutamine to IGP, AICAR and glutamate. The HisF subunit catalyzes the cyclization activity that produces IGP and AICAR from PRFAR using the ammonia provided by the HisH subunit. The protein is Imidazole glycerol phosphate synthase subunit HisF of Salinispora tropica (strain ATCC BAA-916 / DSM 44818 / JCM 13857 / NBRC 105044 / CNB-440).